Consider the following 121-residue polypeptide: HTH-type transcriptional regulator Rv1152 (121 aa).

An HTH gntR-type domain is found at 15–83; that stretch reads KPLFDQLRTQ…GRFGTFISRF (69 aa). Residues 43-62 constitute a DNA-binding region (H-T-H motif); it reads VRDLAGQLGVAANTVARAYR.

The protein localises to the cytoplasm. It is found in the secreted. It localises to the cell wall. Functionally, transcriptional regulator that modulates resistance to vancomycin and aminoglycosides. Negatively regulates the expression of several genes responsive to vancomycin, resulting in decreased susceptibility of bacteria to vancomycin. Negatively regulates the expression of genes encoding the ribosome binding protein Hsp, the small subunit of sulfate adenylyltransferase CysD, the L-lysine-epsilon aminotransferase LAT and the protease HtpX. Also modulates purine metabolism and aminoglycoside antibiotic resistance. Negatively regulates the expression of purine metabolism-related genes and the accumulation of purine metabolites, which affects aminoglycoside antibiotic resistance. This chain is HTH-type transcriptional regulator Rv1152, found in Mycobacterium tuberculosis (strain ATCC 25618 / H37Rv).